The primary structure comprises 173 residues: Shikimate kinase (173 aa).

14-19 is a binding site for ATP; sequence GAGKST. Ser-18 contributes to the Mg(2+) binding site. Residues Asp-36, Arg-60, and Gly-82 each coordinate substrate. Arg-120 contacts ATP. Residue Arg-140 coordinates substrate. Gln-157 is an ATP binding site.

This sequence belongs to the shikimate kinase family. As to quaternary structure, monomer. Mg(2+) is required as a cofactor.

Its subcellular location is the cytoplasm. It carries out the reaction shikimate + ATP = 3-phosphoshikimate + ADP + H(+). It participates in metabolic intermediate biosynthesis; chorismate biosynthesis; chorismate from D-erythrose 4-phosphate and phosphoenolpyruvate: step 5/7. Functionally, catalyzes the specific phosphorylation of the 3-hydroxyl group of shikimic acid using ATP as a cosubstrate. This chain is Shikimate kinase, found in Baumannia cicadellinicola subsp. Homalodisca coagulata.